Consider the following 906-residue polypeptide: Formin-like protein 16 (906 aa).

The first 28 residues, 1–28 (MAPAPSPTPLPLFLLLLLLVGVAPLAAA), serve as a signal peptide directing secretion. The interval 34–76 (QTRFPSTRTPAFATPPPITSPSPSPGTPTATPSSSPPSSSGKR) is disordered. Over residues 46–59 (ATPPPITSPSPSPG) the composition is skewed to pro residues. Over residues 60–73 (TPTATPSSSPPSSS) the composition is skewed to low complexity. The chain crosses the membrane as a helical span at residues 81–101 (VAVVSTALSSFAVSGLAFFLF). Disordered regions lie at residues 113-149 (AGGAGQHYGGAQGGALTGKRPEREPKRPARGNMVDEN), 161-223 (KEGD…SLDS), 250-404 (AYAR…DQQA), 451-474 (RKTKPADSKDASGGSTSAGLGRSN), 677-702 (GSLAKSTDGGNPAASSTSQGPSREER), and 834-906 (LQQQ…SDEE). The span at 114–128 (GGAGQHYGGAQGGAL) shows a compositional bias: gly residues. A compositionally biased stretch (pro residues) spans 174 to 185 (SRRPPQPPPPRP). The segment covering 186 to 196 (YRAERRQDAHE) has biased composition (basic and acidic residues). A compositionally biased stretch (pro residues) spans 270-294 (SPSPAPAPAARPASPSPSLPLPPGR). The segment covering 295 to 310 (ESPSRPQSIAAAAVAS) has biased composition (low complexity). The span at 311–383 (PAPPPPPPPK…KGGPPPPPPK (73 aa)) shows a compositional bias: pro residues. Residues 396–849 (PTGSADQQAK…PTPPPSSSQP (454 aa)) form the FH2 domain. Polar residues-rich tracts occupy residues 463-474 (GGSTSAGLGRSN) and 677-697 (GSLAKSTDGGNPAASSTSQGP). Over residues 847 to 866 (SQPAAPAATTKGAADDAPAP) the composition is skewed to low complexity.

It belongs to the formin-like family. Class-I subfamily.

The protein resides in the membrane. The protein is Formin-like protein 16 (FH16) of Oryza sativa subsp. japonica (Rice).